The sequence spans 502 residues: RNA polymerase sigma factor sigA (502 aa).

The N-terminal 23 residues, 1-23 (MATAAVIGLNTGKRLLSSSFYHS), are a transit peptide targeting the chloroplast. The span at 57 to 71 (YSPSFPSSNRHTQSA) shows a compositional bias: polar residues. Residues 57 to 92 (YSPSFPSSNRHTQSAKALKESVDVASTEKPWLPNGT) are disordered. A Phosphothreonine modification is found at threonine 170. The Polymerase core binding signature appears at 287–300 (DLVQGGLIGLLRGI). A DNA-binding region (H-T-H motif) is located at residues 461-480 (WEDISKRIGLSRERVRQVGL).

Belongs to the sigma-70 factor family. As to quaternary structure, interacts with SIB1 in chloroplast. Binds to CSK. In terms of processing, the phosphorylation of Thr-170 mediated by oxidative conditions of plastoquinone (PQ) changes the promoter specificity, selectively inhibiting the transcription of the psaA gene, which encodes a PS-I protein. Phosphorylation of the holoenzyme occurs in the dark. This phosphorylation in response to plastoquinone redox state modification is mediated by CSK. Highly expressed in leaves, and to a lesser extent in roots. Expressed in old seedlings (8 days), cotyledons, hypocotyls, leaves, sepals and siliques.

The protein resides in the plastid. It localises to the chloroplast. Functionally, essential protein. Sigma factors are initiation factors that promote the attachment of plastid-encoded RNA polymerase (PEP) to specific initiation sites and are then released. Controls the transcription of the psaA gene and thus modulates photosystem stoichiometry. Thereby maintains a harmonious electron flow and photosynthetic efficiency. The sequence is that of RNA polymerase sigma factor sigA (SIGA) from Arabidopsis thaliana (Mouse-ear cress).